Reading from the N-terminus, the 388-residue chain is Reducing end xylose-releasing exo-oligoxylanase (388 aa).

The active-site Proton donor is Glu-70. Asp-263 acts as the Proton acceptor in catalysis.

Belongs to the glycosyl hydrolase 8 (cellulase D) family.

It carries out the reaction Hydrolysis of (1-&gt;4)-beta-D-xylose residues from the reducing end of oligosaccharides.. Functionally, hydrolyzes xylooligosaccharides with a degree of polymerization of greater than or equal to 3, releasing xylose from the reducing end. Only hydrolyzes the beta anomers of xylooligosaccharides, with inversion of anomeric configuration. Hydrolyzes the glucose and xylose-based trisaccharides where xylose is located at the -1 subsite, GXX, XXG and GXG. Does not hydrolyze xylan, chitosan, lichenan, curdlan or carboxymethylcellulose. The protein is Reducing end xylose-releasing exo-oligoxylanase of Halalkalibacterium halodurans (strain ATCC BAA-125 / DSM 18197 / FERM 7344 / JCM 9153 / C-125) (Bacillus halodurans).